The chain runs to 441 residues: UPF0761 membrane protein Clim_1521 (441 aa).

A run of 6 helical transmembrane segments spans residues 54–74, 122–142, 161–181, 203–223, 233–253, and 266–286; these read IFLS…PFLA, TVPL…ISTI, AFTL…SSLG, LISF…YMLV, AFSG…WFVF, and GAIS…LVVL.

The protein belongs to the UPF0761 family.

The protein localises to the cell inner membrane. This chain is UPF0761 membrane protein Clim_1521, found in Chlorobium limicola (strain DSM 245 / NBRC 103803 / 6330).